We begin with the raw amino-acid sequence, 340 residues long: S-adenosylmethionine:tRNA ribosyltransferase-isomerase (340 aa).

The protein belongs to the QueA family. Monomer.

The protein localises to the cytoplasm. The enzyme catalyses 7-aminomethyl-7-carbaguanosine(34) in tRNA + S-adenosyl-L-methionine = epoxyqueuosine(34) in tRNA + adenine + L-methionine + 2 H(+). Its pathway is tRNA modification; tRNA-queuosine biosynthesis. Transfers and isomerizes the ribose moiety from AdoMet to the 7-aminomethyl group of 7-deazaguanine (preQ1-tRNA) to give epoxyqueuosine (oQ-tRNA). The protein is S-adenosylmethionine:tRNA ribosyltransferase-isomerase of Chlorobaculum parvum (strain DSM 263 / NCIMB 8327) (Chlorobium vibrioforme subsp. thiosulfatophilum).